A 1072-amino-acid chain; its full sequence is Zn(2)-C6 fungal-type transcription factor FTF2 (1072 aa).

A DNA-binding region (zn(2)-C6 fungal-type) is located at residues 179-206; that stretch reads CIACRRKKIRCSGEKPACKHCLRSRIPC.

Its subcellular location is the nucleus. Functionally, zn(2)-C6 fungal-type transcription factor that has a role in conidia production and also in plant colonization. Acts as a negative regulator of the production of macroconidia and is required for full virulence and the positive regulation of SIX effectors. In addition, FTF2 is also involved in the regulation of class II hydrophobins FOXG_02746 and FOXG_02748 likely required for plant colonization. This chain is Zn(2)-C6 fungal-type transcription factor FTF2, found in Fusarium oxysporum f. sp. lycopersici (strain 4287 / CBS 123668 / FGSC 9935 / NRRL 34936) (Fusarium vascular wilt of tomato).